The sequence spans 209 residues: Peroxiredoxin (209 aa).

The Thioredoxin domain maps to 2-156 (PLIGDKFPEM…IVRMIRAFRV (155 aa)). Catalysis depends on C44, which acts as the Cysteine sulfenic acid (-SOH) intermediate. Position 119 (R119) interacts with substrate. C198 and C204 form a disulfide bridge.

Belongs to the peroxiredoxin family. Prx6 subfamily. In terms of assembly, homodecamer. Pentamer of dimers that assemble into a ring structure.

It is found in the cytoplasm. The enzyme catalyses a hydroperoxide + [thioredoxin]-dithiol = an alcohol + [thioredoxin]-disulfide + H2O. Its function is as follows. Thiol-specific peroxidase that catalyzes the reduction of hydrogen peroxide and organic hydroperoxides to water and alcohols, respectively. Plays a role in cell protection against oxidative stress by detoxifying peroxides. The protein is Peroxiredoxin of Methanothermobacter thermautotrophicus (strain ATCC 29096 / DSM 1053 / JCM 10044 / NBRC 100330 / Delta H) (Methanobacterium thermoautotrophicum).